The following is a 480-amino-acid chain: RAC-alpha serine/threonine-protein kinase (480 aa).

The 104-residue stretch at 5–108 (AIVKEGWLHK…WTTAIQTVAD (104 aa)) folds into the PH domain. N6-acetyllysine occurs at positions 14 and 20. Residue 14–19 (KRGEYI) participates in 1D-myo-inositol 1,3,4,5-tetrakisphosphate binding. Residues 23–25 (RPR) and Asn-53 contribute to the 1D-myo-inositol 1,3,4,5-tetrakisphosphate site. Cys-60 and Cys-77 form a disulfide bridge. Arg-86 is a 1D-myo-inositol 1,3,4,5-tetrakisphosphate binding site. The residue at position 124 (Ser-124) is a Phosphoserine. Position 129 is a phosphoserine; alternate (Ser-129). A glycan (O-linked (GlcNAc) serine; alternate) is linked at Ser-129. In terms of domain architecture, Protein kinase spans 150–408 (FEYLKLLGKG…AKEIMQHRFF (259 aa)). 156–164 (LGKGTFGKV) contacts ATP. Phosphotyrosine; by TNK2 is present on Tyr-176. Lys-179 lines the ATP pocket. The active-site Proton acceptor is Asp-274. A Glycyl lysine isopeptide (Lys-Gly) (interchain with G-Cter in ubiquitin) cross-link involves residue Lys-284. A disulfide bond links Cys-296 and Cys-310. Thr-305 is a glycosylation site (O-linked (GlcNAc) threonine). A Phosphothreonine; by PDPK1 modification is found at Thr-308. An O-linked (GlcNAc) threonine glycan is attached at Thr-312. The region spanning 409-480 (ASIVWQDVYE…QFSYSASATA (72 aa)) is the AGC-kinase C-terminal domain. Residue Thr-448 is modified to Phosphothreonine. At Thr-450 the chain carries Phosphothreonine; by MTOR. The interval 450 to 480 (TPPDQDDSMEGVDSERRPHFPQFSYSASATA) is disordered. Residue Ser-473 is glycosylated (O-linked (GlcNAc) serine; alternate). Ser-473 is modified (phosphoserine; by MTOR; alternate). Tyr-474 is subject to Phosphotyrosine. Ser-477 carries the phosphoserine modification. Thr-479 is subject to Phosphothreonine.

The protein belongs to the protein kinase superfamily. AGC Ser/Thr protein kinase family. RAC subfamily. In terms of assembly, interacts (via the C-terminus) with CCDC88A (via its C-terminus) and THEM4 (via its C-terminus). Interacts with AKTIP. Interacts (via PH domain) with MTCP1, TCL1A and TCL1B. Interacts with TRAF6. Interacts with GRB10; the interaction leads to GRB10 phosphorylation thus promoting YWHAE binding. Interacts with RARA; the interaction phosphorylates RARA and represses its transactivation activity. Interacts with MAP3K5 and TNK2. Interacts with BAD, CLK2, PPP2R5B, STK3 and STK4. Interacts (via PH domain) with SIRT1. Interacts with SRPK2 in a phosphorylation-dependent manner. Interacts with RAF1. Interacts with PKN2 (via C-terminal domain); the interaction occurs with the C-terminus cleavage products of PKN2 in apoptotic cells. Interacts with TRIM13; the interaction ubiquitinates AKT1 leading to its proteasomal degradation. Interacts with and phosphorylated by PDPK1. Interacts with BTBD10. Interacts with KCTD20. Interacts with PA2G4. Interacts with PA2G4. Interacts with KIF14; the interaction is detected in the plasma membrane upon INS stimulation and promotes AKT1 phosphorylation. Interacts with FAM83B; activates the PI3K/AKT signaling cascade. Interacts with WDFY2 (via WD repeats 1-3). Forms a complex with WDFY2 and FOXO1. Interacts with FAM168A. Interacts with SYAP1 (via phosphorylated form and BSD domain); this interaction is enhanced in a mTORC2-mediated manner in response to epidermal growth factor (EGF) stimulation and activates AKT1. Interacts with PKHM3. Interacts with FKBP5/FKBP51; promoting interaction between Akt/AKT1 and PHLPP1, thereby enhancing dephosphorylation and subsequent activation of Akt/AKT1. Interacts with TMEM175; leading to formation of the lysoK(GF) complex. O-GlcNAcylation at Thr-305 and Thr-312 inhibits activating phosphorylation at Thr-308 via disrupting the interaction between AKT1 and PDPK1. O-GlcNAcylation at Ser-473 also probably interferes with phosphorylation at this site. In terms of processing, phosphorylation on Thr-308, Ser-473 and Tyr-474 is required for full activity. Phosphorylation of the activation loop at Thr-308 by PDPK1/PDK1 is a prerequisite for full activation. Phosphorylation by mTORC2 in response to growth factors plays a key role in AKT1 activation: mTORC2 phosphorylates different sites depending on the context, such as Thr-450, Ser-473, Ser-477 or Thr-479, thereby facilitating subsequent phosphorylation of the activation loop by PDPK1/PDK1. Phosphorylation at Ser-473 by mTORC2 promotes ubiquitination and degradation by the proteasome. Also phosphorylated at Ser-477 and Thr-479 by CDK2, facilitating subsequent phosphorylation of the activation loop by PDPK1/PDK1. Activated TNK2 phosphorylates it on Tyr-176 resulting in its binding to the anionic plasma membrane phospholipid PA. This phosphorylated form localizes to the cell membrane, where it is targeted by PDPK1 and PDPK2 for further phosphorylations on Thr-308 and Ser-473 leading to its activation. Phosphorylated at Thr-308 and Ser-473 by IKBKE and TBK1. Ser-473 phosphorylation is enhanced by interaction with AGAP2 isoform 2 (PIKE-A). Ser-473 phosphorylation is enhanced by signaling through activated FLT3. Ser-473 is dephosphorylated by PHLPP. Dephosphorylated at Thr-308 and Ser-473 by PP2A phosphatase. The phosphorylated form of PPP2R5B is required for bridging AKT1 with PP2A phosphatase. Ser-473 is dephosphorylated by CPPED1, leading to termination of signaling. AIM2 acts as an inhibitor of AKT1 by inhibiting phosphorylation Ser-473: AIM2 acts both by inhibiting the activity of PRKDC/DNA-PK kinase and promoting dephosphorylation by PP2A phosphatase. Post-translationally, ubiquitinated; undergoes both 'Lys-48'- and 'Lys-63'-linked polyubiquitination. TRAF6-induced 'Lys-63'-linked AKT1 ubiquitination is critical for phosphorylation and activation. When ubiquitinated, it translocates to the plasma membrane, where it becomes phosphorylated. When fully phosphorylated and translocated into the nucleus, undergoes 'Lys-48'-polyubiquitination catalyzed by TTC3, leading to its degradation by the proteasome. Ubiquitinated via 'Lys-48'-linked polyubiquitination by ZNRF1, leading to its degradation by the proteasome. Also ubiquitinated by TRIM13 leading to its proteasomal degradation. Phosphorylated, undergoes 'Lys-48'-linked polyubiquitination preferentially at Lys-284 catalyzed by MUL1, leading to its proteasomal degradation. Acetylated on Lys-14 and Lys-20 by the histone acetyltransferases EP300 and KAT2B. Acetylation results in reduced phosphorylation and inhibition of activity. Deacetylated at Lys-14 and Lys-20 by SIRT1. SIRT1-mediated deacetylation relieves the inhibition. In terms of processing, cleavage by caspase-3/CASP3. Cleaved at the caspase-3 consensus site Asp-462 during apoptosis, resulting in down-regulation of the AKT signaling pathway and decreased cell survival.

It is found in the cytoplasm. The protein localises to the nucleus. It localises to the cell membrane. The protein resides in the mitochondrion intermembrane space. The enzyme catalyses L-seryl-[protein] + ATP = O-phospho-L-seryl-[protein] + ADP + H(+). It carries out the reaction L-threonyl-[protein] + ATP = O-phospho-L-threonyl-[protein] + ADP + H(+). Its function is as follows. AKT1 is one of 3 closely related serine/threonine-protein kinases (AKT1, AKT2 and AKT3) called the AKT kinase, and which regulate many processes including metabolism, proliferation, cell survival, growth and angiogenesis. This is mediated through serine and/or threonine phosphorylation of a range of downstream substrates. Over 100 substrate candidates have been reported so far, but for most of them, no isoform specificity has been reported. AKT is responsible of the regulation of glucose uptake by mediating insulin-induced translocation of the SLC2A4/GLUT4 glucose transporter to the cell surface. Phosphorylation of PTPN1 at 'Ser-50' negatively modulates its phosphatase activity preventing dephosphorylation of the insulin receptor and the attenuation of insulin signaling. Phosphorylation of TBC1D4 triggers the binding of this effector to inhibitory 14-3-3 proteins, which is required for insulin-stimulated glucose transport. AKT also regulates the storage of glucose in the form of glycogen by phosphorylating GSK3A at 'Ser-21' and GSK3B at 'Ser-9', resulting in inhibition of its kinase activity. Phosphorylation of GSK3 isoforms by AKT is also thought to be one mechanism by which cell proliferation is driven. AKT also regulates cell survival via the phosphorylation of MAP3K5 (apoptosis signal-related kinase). Phosphorylation of 'Ser-83' decreases MAP3K5 kinase activity stimulated by oxidative stress and thereby prevents apoptosis. AKT mediates insulin-stimulated protein synthesis by phosphorylating TSC2 at 'Ser-939' and 'Thr-1462', thereby activating the mTORC1 signaling pathway, and leading to both phosphorylation of 4E-BP1 and in activation of RPS6KB1. Also regulates the mTORC1 signaling pathway by catalyzing phosphorylation of CASTOR1 and DEPDC5. AKT plays a role as key modulator of the AKT-mTOR signaling pathway controlling the tempo of the process of newborn neurons integration during adult neurogenesis, including correct neuron positioning, dendritic development and synapse formation. Part of a positive feedback loop of mTORC2 signaling by mediating phosphorylation of MAPKAP1/SIN1, promoting mTORC2 activation. AKT is involved in the phosphorylation of members of the FOXO factors (Forkhead family of transcription factors), leading to binding of 14-3-3 proteins and cytoplasmic localization. In particular, FOXO1 is phosphorylated at 'Thr-24', 'Ser-256' and 'Ser-319'. FOXO3 and FOXO4 are phosphorylated on equivalent sites. AKT has an important role in the regulation of NF-kappa-B-dependent gene transcription and positively regulates the activity of CREB1 (cyclic AMP (cAMP)-response element binding protein). The phosphorylation of CREB1 induces the binding of accessory proteins that are necessary for the transcription of pro-survival genes such as BCL2 and MCL1. AKT phosphorylates 'Ser-454' on ATP citrate lyase (ACLY), thereby potentially regulating ACLY activity and fatty acid synthesis. Activates the 3B isoform of cyclic nucleotide phosphodiesterase (PDE3B) via phosphorylation of 'Ser-273', resulting in reduced cyclic AMP levels and inhibition of lipolysis. Phosphorylates PIKFYVE on 'Ser-318', which results in increased PI(3)P-5 activity. The Rho GTPase-activating protein DLC1 is another substrate and its phosphorylation is implicated in the regulation cell proliferation and cell growth. Signals downstream of phosphatidylinositol 3-kinase (PI(3)K) to mediate the effects of various growth factors such as platelet-derived growth factor (PDGF), epidermal growth factor (EGF), insulin and insulin-like growth factor 1 (IGF1). AKT mediates the antiapoptotic effects of IGF1. Essential for the SPATA13-mediated regulation of cell migration and adhesion assembly and disassembly. May be involved in the regulation of the placental development. Phosphorylates STK4/MST1 at 'Thr-120' and 'Thr-387' leading to inhibition of its: kinase activity, nuclear translocation, autophosphorylation and ability to phosphorylate FOXO3. Phosphorylates STK3/MST2 at 'Thr-117' and 'Thr-384' leading to inhibition of its: cleavage, kinase activity, autophosphorylation at Thr-180, binding to RASSF1 and nuclear translocation. Phosphorylates SRPK2 and enhances its kinase activity towards SRSF2 and ACIN1 and promotes its nuclear translocation. Phosphorylates RAF1 at 'Ser-259' and negatively regulates its activity. Phosphorylation of BAD stimulates its pro-apoptotic activity. Phosphorylates KAT6A at 'Thr-369' and this phosphorylation inhibits the interaction of KAT6A with PML and negatively regulates its acetylation activity towards p53/TP53. Phosphorylates palladin (PALLD), modulating cytoskeletal organization and cell motility. Phosphorylates prohibitin (PHB), playing an important role in cell metabolism and proliferation. Phosphorylates CDKN1A, for which phosphorylation at 'Thr-145' induces its release from CDK2 and cytoplasmic relocalization. These recent findings indicate that the AKT1 isoform has a more specific role in cell motility and proliferation. Phosphorylates CLK2 thereby controlling cell survival to ionizing radiation. Phosphorylates PCK1 at 'Ser-90', reducing the binding affinity of PCK1 to oxaloacetate and changing PCK1 into an atypical protein kinase activity using GTP as donor. Also acts as an activator of TMEM175 potassium channel activity in response to growth factors: forms the lysoK(GF) complex together with TMEM175 and acts by promoting TMEM175 channel activation, independently of its protein kinase activity. Acts as a negative regulator of the cGAS-STING pathway by mediating phosphorylation of CGAS during mitosis, leading to its inhibition. Acts as a regulator of mitochondrial calcium uptake by mediating phosphorylation of MICU1 in the mitochondrial intermembrane space, impairing MICU1 maturation. Acts as an inhibitor of tRNA methylation by mediating phosphorylation of the N-terminus of METTL1, thereby inhibiting METTL1 methyltransferase activity. In response to LPAR1 receptor pathway activation, phosphorylates Rabin8/RAB3IP which alters its activity and phosphorylates WDR44 which induces WDR44 binding to Rab11, thereby switching Rab11 vesicular function from preciliary trafficking to endocytic recycling. This is RAC-alpha serine/threonine-protein kinase (AKT1) from Bos taurus (Bovine).